The primary structure comprises 264 residues: Cysteine-rich repeat secretory protein 26 (264 aa).

The N-terminal stretch at 1 to 27 is a signal peptide; that stretch reads MSSNIFGSVPILVVVAIQLLLVHNVSS. Gnk2-homologous domains follow at residues 34 to 142 and 148 to 261; these read YLNH…SVDS and YKRM…LYPF.

This sequence belongs to the cysteine-rich repeat secretory protein family.

Its subcellular location is the secreted. In Arabidopsis thaliana (Mouse-ear cress), this protein is Cysteine-rich repeat secretory protein 26 (CRRSP26).